Here is an 89-residue protein sequence, read N- to C-terminus: MASGWTHRLLLLAAVVTLGATPIAAASMEYLVTAPGYLTPNADIKITAVVTNPSSAGQLKVDLWGTRSGIQPEQHSSGKSDVRRWRSRY.

A signal peptide spans 1–26 (MASGWTHRLLLLAAVVTLGATPIAAA). Positions 27-57 (SMEYLVTAPGYLTPNADIKITAVVTNPSSAG) are excised as a propeptide. Residues 68–89 (SGIQPEQHSSGKSDVRRWRSRY) form a disordered region. The segment covering 76-89 (SSGKSDVRRWRSRY) has biased composition (basic and acidic residues).

Functionally, has antifungal activity against C.albicans. Has antibacterial activity against the Gram-positive bacterium S.aureus and the Gram-negative bacterium E.coli. Lacks hemolytic activity against rabbit erythrocytes. This chain is Ixosin-B, found in Ixodes sinensis (Hard tick).